The sequence spans 164 residues: Respiratory growth induced protein 2 (164 aa).

The protein belongs to the RGI1 family.

It is found in the cytoplasm. In terms of biological role, involved in the control of energetic metabolism and significantly contribute to cell fitness, especially under respiratory growth conditions. The chain is Respiratory growth induced protein 2 (RGI2) from Saccharomyces cerevisiae (strain RM11-1a) (Baker's yeast).